Here is a 255-residue protein sequence, read N- to C-terminus: MSVDQELIETQKNWIPLEANPEVLTTFMQSLGVSKDWEFCDIYGIDEGLLEMVPSPCVAVILLFPITNEYEDKRYKLEKEIEEKGQVLSDKVYFMKQYIGNACGTIGVIHSVLNNANVIEFNENGFFKQFLDKTTSLSTEERAISLLKNSEIEKSHEISALQGQSNVPQEDEPVVLHFVSFVHVDGHLYELDGRKPFAINHGESSAETLLKDTANVLQKMIDEDPKEIRFNLMGLVKKPNEESEEEEEKEKEETK.

Residues 13–237 (NWIPLEANPE…IRFNLMGLVK (225 aa)) form the UCH catalytic domain. The interaction with ubiquitin stretch occupies residues 16–21 (PLEANP). Catalysis depends on cysteine 103, which acts as the Nucleophile. The active-site Proton donor is the histidine 177. Residues 227 to 232 (EIRFNL) are interaction with ubiquitin. Positions 235 to 255 (LVKKPNEESEEEEEKEKEETK) are disordered. The span at 242-255 (ESEEEEEKEKEETK) shows a compositional bias: acidic residues.

Belongs to the peptidase C12 family.

The protein resides in the cytoplasm. It catalyses the reaction Thiol-dependent hydrolysis of ester, thioester, amide, peptide and isopeptide bonds formed by the C-terminal Gly of ubiquitin (a 76-residue protein attached to proteins as an intracellular targeting signal).. Ubiquitin-protein hydrolase is involved both in the processing of ubiquitin precursors and of ubiquitinated proteins. This enzyme is a thiol protease that recognizes and hydrolyzes a peptide bond at the C-terminal glycine of either ubiquitin or nedd8. In Dictyostelium discoideum (Social amoeba), this protein is Probable ubiquitin carboxyl-terminal hydrolase (uch1).